We begin with the raw amino-acid sequence, 42 residues long: Alpha-conotoxin VnIB (42 aa).

A propeptide spanning residues 1 to 22 (ASDGRNAAADDKASDPIALTVR) is cleaved from the precursor. Disulfide bonds link Cys-25–Cys-31 and Cys-26–Cys-38. Glycine amide is present on Gly-39.

The protein belongs to the conotoxin A superfamily. In terms of tissue distribution, expressed by the venom duct.

It is found in the secreted. Functionally, alpha-conotoxins act on postsynaptic membranes, they bind to the nicotinic acetylcholine receptors (nAChR) and thus inhibit them. This toxin potently and selectively inhibits human and rat alpha-6-beta-4/CHRNA6-CHRNB4 nAChR (IC(50)=12 nM on rat nAChR). It exhibits rapid binding and unbinding at this receptor. It also shows activity on rat alpha-6-beta-4/CHRNA6-CHRNB4 (IC(50)=12 nM), human alpha-6/alpha-3-beta-4 (CHRNA6/CHRNA3-CHRNB4) (IC(50)=5.3 nM), rat alpha-6/alpha-3-beta-4 (CHRNA6/CHRNA3-CHRNB4) (IC(50)=18 nM), rat alpha-3-beta-4/CHRNA3-CHRNB4 (IC(50)=320 nM), and rat alpha-6/alpha-3-beta-2-beta-3 (CHRNA6/CHRNA3-CHRNB2-CHRNB3) (IC(50)=4 uM). In Conus ventricosus (Mediterranean cone), this protein is Alpha-conotoxin VnIB.